The chain runs to 1249 residues: Calmodulin-regulated spectrin-associated protein 3 (1249 aa).

7 disordered regions span residues 183 to 205 (KTEQEAAQRASPAAPADGAAPAQ), 328 to 385 (PDGH…SMSH), 430 to 457 (VSSDSLGPPRPAPARTPTQPPPEPGDLP), 473 to 609 (LLPD…RLEE), 632 to 696 (LGKS…HEGL), 714 to 1029 (QRDM…SALA), and 1061 to 1111 (NNLG…TGPR). A Phosphothreonine modification is found at Thr184. Low complexity predominate over residues 189–205 (AQRASPAAPADGAAPAQ). Ser193 is modified (phosphoserine). In terms of domain architecture, Calponin-homology (CH) spans 203–312 (PAQPSIRYRK…LVVMLAELFM (110 aa)). Ser334, Ser341, Ser347, Ser351, Ser368, Ser373, and Ser382 each carry phosphoserine. The span at 341–352 (SPPQNNSGSSSP) shows a compositional bias: low complexity. The span at 364-383 (GGPQSPLRGSTGSLKSSPSM) shows a compositional bias: polar residues. The segment covering 437–454 (PPRPAPARTPTQPPPEPG) has biased composition (pro residues). Phosphoserine is present on residues Ser547, Ser554, and Ser560. Positions 568–579 (AERKKQLVKAEA) are enriched in basic and acidic residues. Positions 594 to 604 (EALSSEMSELS) are enriched in low complexity. Positions 594–628 (EALSSEMSELSARLEEKRRAIEAQKRRIEAIFAKH) form a coiled coil. Acidic residues predominate over residues 647–657 (GEAEAEAEEAD). Phosphoserine is present on Ser685. Positions 696 to 729 (LGEYNRAVSKLSAALSSLQRDMQRLTDQQQRLLA) form a coiled coil. The segment covering 731 to 741 (PEAPGSAPPPA) has biased composition (pro residues). Positions 754–779 (AASPSPARRVPATRRSPGPGPSQSPR) are enriched in low complexity. Ser769 is modified (phosphoserine). Residue Thr799 is modified to Phosphothreonine. Ser814 carries the post-translational modification Phosphoserine. Residues 814–825 (SPSQVPVQTRSS) are compositionally biased toward polar residues. Basic and acidic residues predominate over residues 889 to 940 (YKDEDKPEDEMAQKRASLLERQQRRAEEARRRKQWQEVEKEQRREEAARLAQ). Residues 896 to 935 (EDEMAQKRASLLERQQRRAEEARRRKQWQEVEKEQRREEA) are a coiled coil. The segment covering 950–964 (VSAVPMATPAPAARA) has biased composition (low complexity). A compositionally biased stretch (basic and acidic residues) spans 970-998 (VGPRKGDFTRQEYERRAQLKLMDDLDKVL). Residue Ser1074 is modified to Phosphoserine. In terms of domain architecture, CKK spans 1109–1243 (GPRLYKEPSA…QGKKPTTPKK (135 aa)).

The protein belongs to the CAMSAP1 family. As to quaternary structure, interacts with PLEKHA7. Interacts with CAMSAP2. Interacts with KATNA1 and KATNB1; leading to regulate the length of CAMSAP3-decorated microtubule stretches. Interacts with AKAP9; regulating Golgi assembly in epithelial cells. Interacts with MACF1. Interacts with AKNA.

The protein resides in the cytoplasm. The protein localises to the cytoskeleton. It is found in the cell junction. It localises to the adherens junction. Its subcellular location is the cilium axoneme. The protein resides in the cilium basal body. Key microtubule-organizing protein that specifically binds the minus-end of non-centrosomal microtubules and regulates their dynamics and organization. Specifically recognizes growing microtubule minus-ends and autonomously decorates and stabilizes microtubule lattice formed by microtubule minus-end polymerization. Acts on free microtubule minus-ends that are not capped by microtubule-nucleating proteins or other factors and protects microtubule minus-ends from depolymerization. In addition, it also reduces the velocity of microtubule polymerization. Required for the biogenesis and the maintenance of zonula adherens by anchoring the minus-end of microtubules to zonula adherens and by recruiting the kinesin KIFC3 to those junctional sites. Required for orienting the apical-to-basal polarity of microtubules in epithelial cells: acts by tethering non-centrosomal microtubules to the apical cortex, leading to their longitudinal orientation. Plays a key role in early embryos, which lack centrosomes: accumulates at the microtubule bridges that connect pairs of cells and enables the formation of a non-centrosomal microtubule-organizing center that directs intracellular transport in the early embryo. Couples non-centrosomal microtubules with actin: interaction with MACF1 at the minus ends of non-centrosomal microtubules, tethers the microtubules to actin filaments, regulating focal adhesion size and cell migration. Plays a key role in the generation of non-centrosomal microtubules by accumulating in the pericentrosomal region and cooperating with KATNA1 to release non-centrosomal microtubules from the centrosome. Through the microtubule cytoskeleton, also regulates the organization of cellular organelles including the Golgi and the early endosomes. Through interaction with AKAP9, involved in translocation of Golgi vesicles in epithelial cells, where microtubules are mainly non-centrosomal. Plays an important role in motile cilia function by facilitatating proper orientation of basal bodies and formation of central microtubule pairs in motile cilia. The chain is Calmodulin-regulated spectrin-associated protein 3 from Homo sapiens (Human).